Reading from the N-terminus, the 95-residue chain is Microcin E492 immunity protein (95 aa).

The next 3 membrane-spanning stretches (helical) occupy residues 1–21, 35–55, and 67–87; these read MTLL…FCII, VIVL…TKVY, and YLFC…ILTI.

Belongs to the MceB microcin immunity protein family.

Its subcellular location is the cell inner membrane. Its function is as follows. Protect the producing cell against microcin E492. The chain is Microcin E492 immunity protein from Klebsiella pneumoniae.